The chain runs to 612 residues: Dihydroxy-acid dehydratase (612 aa).

D81 contacts Mg(2+). C122 serves as a coordination point for [2Fe-2S] cluster. D123 and K124 together coordinate Mg(2+). The residue at position 124 (K124) is an N6-carboxylysine. C195 contacts [2Fe-2S] cluster. E491 contributes to the Mg(2+) binding site. The Proton acceptor role is filled by S517.

Belongs to the IlvD/Edd family. As to quaternary structure, homodimer. It depends on [2Fe-2S] cluster as a cofactor. The cofactor is Mg(2+).

The enzyme catalyses (2R)-2,3-dihydroxy-3-methylbutanoate = 3-methyl-2-oxobutanoate + H2O. It carries out the reaction (2R,3R)-2,3-dihydroxy-3-methylpentanoate = (S)-3-methyl-2-oxopentanoate + H2O. Its pathway is amino-acid biosynthesis; L-isoleucine biosynthesis; L-isoleucine from 2-oxobutanoate: step 3/4. It participates in amino-acid biosynthesis; L-valine biosynthesis; L-valine from pyruvate: step 3/4. Its function is as follows. Functions in the biosynthesis of branched-chain amino acids. Catalyzes the dehydration of (2R,3R)-2,3-dihydroxy-3-methylpentanoate (2,3-dihydroxy-3-methylvalerate) into 2-oxo-3-methylpentanoate (2-oxo-3-methylvalerate) and of (2R)-2,3-dihydroxy-3-methylbutanoate (2,3-dihydroxyisovalerate) into 2-oxo-3-methylbutanoate (2-oxoisovalerate), the penultimate precursor to L-isoleucine and L-valine, respectively. In Rhizobium etli (strain ATCC 51251 / DSM 11541 / JCM 21823 / NBRC 15573 / CFN 42), this protein is Dihydroxy-acid dehydratase.